The sequence spans 130 residues: Small ribosomal subunit protein uS8 (130 aa).

It belongs to the universal ribosomal protein uS8 family. As to quaternary structure, part of the 30S ribosomal subunit. Contacts proteins S5 and S12.

One of the primary rRNA binding proteins, it binds directly to 16S rRNA central domain where it helps coordinate assembly of the platform of the 30S subunit. The sequence is that of Small ribosomal subunit protein uS8 from Vibrio atlanticus (strain LGP32) (Vibrio splendidus (strain Mel32)).